Here is a 952-residue protein sequence, read N- to C-terminus: Plasma membrane ATPase 4 (952 aa).

The Cytoplasmic segment spans residues 1-64 (MAKAISLEEI…EKNESKILKF (64 aa)). A helical transmembrane segment spans residues 65–84 (LGFMWNPLSWVMEAAAVMAI). Residues 85–96 (ALANGDGKPPDW) are Extracellular-facing. Residues 97-117 (QDFIGIICLLVINSTISFIEE) form a helical membrane-spanning segment. At 118-246 (NNAGNAAAAL…GHFQKVLTAI (129 aa)) the chain is on the cytoplasmic side. The helical transmembrane segment at 247-267 (GNFCICSIAIGMLVEIIVMYP) threads the bilayer. At 268–277 (IQHRKYRDGI) the chain is on the extracellular side. Residues 278–299 (DNLLVLLIGGIPIAMPTVLSVT) form a helical membrane-spanning segment. Topologically, residues 300–646 (MAIGSHRLSQ…TSRAIFQRMK (347 aa)) are cytoplasmic. Catalysis depends on D332, which acts as the 4-aspartylphosphate intermediate. Mg(2+)-binding residues include D591 and D595. Residues 647–668 (NYTIYAVSITIRIVFGFMFIAL) form a helical membrane-spanning segment. At 669–673 (IWKYD) the chain is on the extracellular side. A helical membrane pass occupies residues 674–696 (FSAFMVLIIAILNDGTIMTISKD). Residues 697-712 (RVKPSPMPDSWKLKEI) lie on the Cytoplasmic side of the membrane. A helical transmembrane segment spans residues 713 to 733 (FATGVVLGGYQALMTVVFFWA). Over 734 to 754 (MHDTDFFSDKFGVKSLRNSDE) the chain is Extracellular. Residues 755–775 (EMMSALYLQVSIISQALIFVT) form a helical membrane-spanning segment. The Cytoplasmic segment spans residues 776–787 (RSRSWSFLERPG). The chain crosses the membrane as a helical span at residues 788 to 808 (MLLVIAFMIAQLVATLIAVYA). Over 809 to 817 (NWAFARVKG) the chain is Extracellular. Residues 818–838 (CGWGWAGVIWLYSIIFYLPLD) form a helical membrane-spanning segment. Residues 839-952 (IMKFAIRYIL…IETIQQHYTV (114 aa)) are Cytoplasmic-facing.

It belongs to the cation transport ATPase (P-type) (TC 3.A.3) family. Type IIIA subfamily. Expressed at high levels in root, stem, leaf and flower.

Its subcellular location is the cell membrane. It carries out the reaction ATP + H2O + H(+)(in) = ADP + phosphate + 2 H(+)(out). The plasma membrane ATPase of plants and fungi is a hydrogen ion pump. The proton gradient it generates drives the active transport of nutrients by H(+)-symport. The resulting external acidification and/or internal alkinization may mediate growth responses. The chain is Plasma membrane ATPase 4 (PMA4) from Nicotiana plumbaginifolia (Leadwort-leaved tobacco).